Reading from the N-terminus, the 434-residue chain is MDFEKDVIRTVTFKLIPALVILYLVAYIDRAAVGFAHLHMGADVGIGDAAYGLGAGLFFIGYFLFEVPSNLLLDKFGARKWFTRILLTWGLITMAMALIQGPKSFYLLRFLLGVAEAGFFPGVLYLITQWYPVRHRGKIMGMFVLSQPIAMMIAGPLAGLLLGMDGIANLHGWQWLFVAVGLPAVLLALPTFLWLPDNIDKVKWLSIEQKQWLKNELVKDEAEYDQTRHANPLHALKDKRVLLLALYYLPVTLSIYGLNLWLPTIIKQFGGGSDIQIGFLSSIPYIFGIIGLLIIPRSTDRLNDRYGHLSFLYALGACAMFLSGWLNSPVMQLAALAVVAFCLFSSTAVFWTLPGRFLTGASAAAGIALINSVGNLGGYVGPFGIGLLKEYTGNMAAGLYFLSIVMLFGLILTYIVYAKLERQKTQTVNIQKPL.

12 helical membrane-spanning segments follow: residues 15–35 (LIPALVILYLVAYIDRAAVGF), 45–65 (GIGDAAYGLGAGLFFIGYFLF), 85–105 (ILLTWGLITMAMALIQGPKSF), 110–130 (FLLGVAEAGFFPGVLYLITQW), 142–162 (MFVLSQPIAMMIAGPLAGLLL), 175–195 (WLFVAVGLPAVLLALPTFLWL), 241–261 (VLLLALYYLPVTLSIYGLNLW), 275–295 (IQIGFLSSIPYIFGIIGLLII), 306–326 (YGHLSFLYALGACAMFLSGWL), 333–353 (LAALAVVAFCLFSSTAVFWTL), 367–387 (IALINSVGNLGGYVGPFGIGL), and 396–416 (AAGLYFLSIVMLFGLILTYIV).

The protein belongs to the major facilitator superfamily.

Its subcellular location is the cell inner membrane. Functionally, efflux pump that mediates resistance to quinolone-type antibiotics. This Acinetobacter baumannii protein is Quinolone resistance transporter.